We begin with the raw amino-acid sequence, 80 residues long: Cytochrome c oxidase subunit 7B, mitochondrial (80 aa).

A mitochondrion-targeting transit peptide spans 1–24; sequence MFPLVKSALNRLQVRSIQQTMARQ. Over 25–32 the chain is Mitochondrial matrix; it reads SHQKRTPD. The chain crosses the membrane as a helical span at residues 33-59; sequence FHDKYGNAVLASGATFCIVTWTYVATQ. At 60–80 the chain is on the mitochondrial intermembrane side; sequence VGIEWNLSPVGRVTPKEWRNQ.

It belongs to the cytochrome c oxidase VIIb family. In terms of assembly, component of the cytochrome c oxidase (complex IV, CIV), a multisubunit enzyme composed of 14 subunits. The complex is composed of a catalytic core of 3 subunits MT-CO1, MT-CO2 and MT-CO3, encoded in the mitochondrial DNA, and 11 supernumerary subunits COX4I1 (or COX4I2), COX5A, COX5B, COX6A1 (or COX6A2), COX6B1 (or COX6B2), COX6C, COX7A2 (or COX7A1), COX7B, COX7C, COX8A and NDUFA4, which are encoded in the nuclear genome. The complex exists as a monomer or a dimer and forms supercomplexes (SCs) in the inner mitochondrial membrane with NADH-ubiquinone oxidoreductase (complex I, CI) and ubiquinol-cytochrome c oxidoreductase (cytochrome b-c1 complex, complex III, CIII), resulting in different assemblies (supercomplex SCI(1)III(2)IV(1) and megacomplex MCI(2)III(2)IV(2)).

It is found in the mitochondrion inner membrane. It functions in the pathway energy metabolism; oxidative phosphorylation. In terms of biological role, component of the cytochrome c oxidase, the last enzyme in the mitochondrial electron transport chain which drives oxidative phosphorylation. The respiratory chain contains 3 multisubunit complexes succinate dehydrogenase (complex II, CII), ubiquinol-cytochrome c oxidoreductase (cytochrome b-c1 complex, complex III, CIII) and cytochrome c oxidase (complex IV, CIV), that cooperate to transfer electrons derived from NADH and succinate to molecular oxygen, creating an electrochemical gradient over the inner membrane that drives transmembrane transport and the ATP synthase. Cytochrome c oxidase is the component of the respiratory chain that catalyzes the reduction of oxygen to water. Electrons originating from reduced cytochrome c in the intermembrane space (IMS) are transferred via the dinuclear copper A center (CU(A)) of subunit 2 and heme A of subunit 1 to the active site in subunit 1, a binuclear center (BNC) formed by heme A3 and copper B (CU(B)). The BNC reduces molecular oxygen to 2 water molecules using 4 electrons from cytochrome c in the IMS and 4 protons from the mitochondrial matrix. Plays a role in proper central nervous system (CNS) development in vertebrates. In Homo sapiens (Human), this protein is Cytochrome c oxidase subunit 7B, mitochondrial (COX7B).